Consider the following 1164-residue polypeptide: Phospholipid-transporting ATPase IA (1164 aa).

Residues 1 to 65 lie on the Cytoplasmic side of the membrane; the sequence is MPTMRRTVSE…TAKYNIITFL (65 aa). Ser25 carries the post-translational modification Phosphoserine. Thr28 bears the Phosphothreonine mark. Phosphoserine is present on Ser29. Residues 66 to 86 traverse the membrane as a helical segment; sequence PRFLYSQFRRAANSFFLFIAL. Topologically, residues 87–92 are exoplasmic loop; it reads LQQIPD. The chain crosses the membrane as a helical span at residues 93–115; sequence VSPTGRYTTLVPLLFILAVAAIK. Residues 116 to 297 are Cytoplasmic-facing; that stretch reads EIIEDIKRHK…SNVERITNVQ (182 aa). The chain crosses the membrane as a helical span at residues 298–319; the sequence is ILILFCILIAMSLVCSVGSAIW. Over 320–344 the chain is Exoplasmic loop; sequence NRRHSGKDWYLNLNYGGASNFGLNF. Residues 345-366 traverse the membrane as a helical segment; that stretch reads LTFIILFNNLIPISLLVTLEVV. At 367–857 the chain is on the cytoplasmic side; sequence KFTQAYFINW…GAWNYNRVSK (491 aa). Residue Asp409 is the 4-aspartylphosphate intermediate of the active site. 3 residues coordinate ATP: Asp409, Lys410, and Thr411. Asp409 contacts Mg(2+). Thr411 is a Mg(2+) binding site. Phosphoserine is present on Ser443. Residues Glu508, Phe549, Lys572, Arg605, Thr685, Gly686, Asp687, 741-748, Arg775, and Lys781 each bind ATP; that span reads ALIIDGKT. Asp801 provides a ligand contact to Mg(2+). Asn804 and Asp805 together coordinate ATP. A Mg(2+)-binding site is contributed by Asp805. A helical transmembrane segment spans residues 858-878; that stretch reads CILYCFYKNIVLYIIEIWFAF. Residues 879–890 are Exoplasmic loop-facing; that stretch reads VNGFSGQILFER. A helical transmembrane segment spans residues 891 to 910; the sequence is WCIGLYNVMFTAMPPLTLGI. At 911 to 940 the chain is on the cytoplasmic side; the sequence is FERSCRKENMLKYPELYKTSQNALDFNTKV. Residues 941–962 traverse the membrane as a helical segment; the sequence is FWVHCLNGLFHSVILFWFPLKA. Residues 963-976 are Exoplasmic loop-facing; that stretch reads LQYGTAFGNGKTSD. Residues 977-999 form a helical membrane-spanning segment; the sequence is YLLLGNFVYTFVVITVCLKAGLE. Topologically, residues 1000–1005 are cytoplasmic; the sequence is TSYWTW. The chain crosses the membrane as a helical span at residues 1006 to 1026; that stretch reads FSHIAIWGSIALWVVFFGIYS. Residues 1027–1044 are Exoplasmic loop-facing; it reads SLWPAIPMAPDMSGEAAM. The chain crosses the membrane as a helical span at residues 1045–1070; it reads LFSSGVFWMGLLFIPVASLLLDVVYK. Topologically, residues 1071–1164 are cytoplasmic; it reads VIKRTAFKTL…DTTKQRPDEW (94 aa). 1095 to 1102 lines the ATP pocket; that stretch reads GAVVLGKS. The residue at position 1126 (Ser1126) is a Phosphoserine.

This sequence belongs to the cation transport ATPase (P-type) (TC 3.A.3) family. Type IV subfamily. In terms of assembly, component of a P4-ATPase flippase complex which consists of a catalytic alpha subunit and an accessory beta subunit. Interacts with TMEM30A to form a flippase complex; this complex forms an intermediate phosphoenzyme. Interacts with TMEM30B; this interaction is reported conflictingly. The cofactor is Mg(2+). Cleaved by calpain in a caspase- and calcium influx-dependent manner during platelet apoptosis leading to a 100 kDa polypeptide. As to expression, found in most adult tissues except liver, testis and placenta. Most abundant in heart, brain and skeletal muscle. Also detected in fetal tissues. Isoform 1 is only detected in brain, skeletal muscle and heart and is the most abundant form in skeletal muscle. Highly expressed in platelets.

It localises to the cytoplasmic vesicle. The protein localises to the secretory vesicle. It is found in the chromaffin granule membrane. The protein resides in the cytoplasmic granule. Its subcellular location is the cell membrane. It localises to the endoplasmic reticulum. The protein localises to the golgi apparatus. The enzyme catalyses ATP + H2O + phospholipidSide 1 = ADP + phosphate + phospholipidSide 2.. The catalysed reaction is a 1,2-diacyl-sn-glycero-3-phospho-L-serine(out) + ATP + H2O = a 1,2-diacyl-sn-glycero-3-phospho-L-serine(in) + ADP + phosphate + H(+). With respect to regulation, ATPase activity is stimulated by phosphatidylserine (PS) and minimally by phosphatidylethanolamine (PE). ATPase activity is inhibited by beryllium fluoride and aluminum trifluoride. In terms of biological role, catalytic component of a P4-ATPase flippase complex which catalyzes the hydrolysis of ATP coupled to the transport of aminophospholipids from the outer to the inner leaflet of various membranes and ensures the maintenance of asymmetric distribution of phospholipids. Phospholipid translocation also seems to be implicated in vesicle formation and in uptake of lipid signaling molecules. In vitro, its ATPase activity is selectively and stereospecifically stimulated by phosphatidylserine (PS). The flippase complex ATP8A1:TMEM30A seems to play a role in regulation of cell migration probably involving flippase-mediated translocation of phosphatidylethanolamine (PE) at the cell membrane. Acts as aminophospholipid translocase at the cell membrane in neuronal cells. The polypeptide is Phospholipid-transporting ATPase IA (Homo sapiens (Human)).